Consider the following 527-residue polypeptide: ATP synthase subunit alpha (527 aa).

An ATP-binding site is contributed by 169–176 (GDRQTGKT).

Belongs to the ATPase alpha/beta chains family. F-type ATPases have 2 components, CF(1) - the catalytic core - and CF(0) - the membrane proton channel. CF(1) has five subunits: alpha(3), beta(3), gamma(1), delta(1), epsilon(1). CF(0) has three main subunits: a(1), b(2) and c(9-12). The alpha and beta chains form an alternating ring which encloses part of the gamma chain. CF(1) is attached to CF(0) by a central stalk formed by the gamma and epsilon chains, while a peripheral stalk is formed by the delta and b chains.

It is found in the cell membrane. The enzyme catalyses ATP + H2O + 4 H(+)(in) = ADP + phosphate + 5 H(+)(out). Produces ATP from ADP in the presence of a proton gradient across the membrane. The alpha chain is a regulatory subunit. This chain is ATP synthase subunit alpha, found in Metamycoplasma arthritidis (strain 158L3-1) (Mycoplasma arthritidis).